We begin with the raw amino-acid sequence, 506 residues long: Glucan endo-1,3-beta-glucosidase 13 (506 aa).

The N-terminal stretch at methionine 1–tyrosine 22 is a signal peptide. N-linked (GlcNAc...) asparagine glycosylation is present at asparagine 70. Glutamate 119 acts as the Proton donor in catalysis. N-linked (GlcNAc...) asparagine glycans are attached at residues asparagine 127, asparagine 175, and asparagine 212. Glutamate 264 (nucleophile) is an active-site residue. N-linked (GlcNAc...) asparagine glycans are attached at residues asparagine 356 and asparagine 361. Cysteine 370 and cysteine 433 form a disulfide bridge. 2 N-linked (GlcNAc...) asparagine glycosylation sites follow: asparagine 459 and asparagine 465. The GPI-anchor amidated serine moiety is linked to residue serine 471. Positions serine 472–leucine 506 are cleaved as a propeptide — removed in mature form.

This sequence belongs to the glycosyl hydrolase 17 family. Post-translationally, contains two additional disulfide bonds.

It is found in the secreted. Its subcellular location is the cell wall. It localises to the cell membrane. The enzyme catalyses Hydrolysis of (1-&gt;3)-beta-D-glucosidic linkages in (1-&gt;3)-beta-D-glucans.. The chain is Glucan endo-1,3-beta-glucosidase 13 from Arabidopsis thaliana (Mouse-ear cress).